A 414-amino-acid polypeptide reads, in one-letter code: Glucose-1-phosphate adenylyltransferase (414 aa).

Alpha-D-glucose 1-phosphate-binding positions include Tyr99, Gly164, 181-182, and Ser199; that span reads EK.

Belongs to the bacterial/plant glucose-1-phosphate adenylyltransferase family. Homotetramer.

It carries out the reaction alpha-D-glucose 1-phosphate + ATP + H(+) = ADP-alpha-D-glucose + diphosphate. The protein operates within glycan biosynthesis; glycogen biosynthesis. Its function is as follows. Involved in the biosynthesis of ADP-glucose, a building block required for the elongation reactions to produce glycogen. Catalyzes the reaction between ATP and alpha-D-glucose 1-phosphate (G1P) to produce pyrophosphate and ADP-Glc. The polypeptide is Glucose-1-phosphate adenylyltransferase (Bifidobacterium longum (strain DJO10A)).